The chain runs to 1343 residues: DNA-directed RNA polymerase subunit beta (1343 aa).

Belongs to the RNA polymerase beta chain family. In terms of assembly, the RNAP catalytic core consists of 2 alpha, 1 beta, 1 beta' and 1 omega subunit. When a sigma factor is associated with the core the holoenzyme is formed, which can initiate transcription.

The catalysed reaction is RNA(n) + a ribonucleoside 5'-triphosphate = RNA(n+1) + diphosphate. Functionally, DNA-dependent RNA polymerase catalyzes the transcription of DNA into RNA using the four ribonucleoside triphosphates as substrates. In Haemophilus influenzae (strain ATCC 51907 / DSM 11121 / KW20 / Rd), this protein is DNA-directed RNA polymerase subunit beta.